The following is a 314-amino-acid chain: Mitochondrial translation factor 2 (314 aa).

Residues 111 to 136 form a disordered region; sequence ENSSNIYDPSSPPDSPRKQQTHLGTI.

As to quaternary structure, component of the MRH5C complex, composed of mrh5, ppr4, mtf2, and sls1. Proteins mtf2 and sls1 form a subcomplex that serves as a scaffold to bring mrh5 and ppr4 together. The MRH5C complex associates with the small subunit of the mitochondrial ribosome.

In terms of biological role, translation activation factor that as part of the MRH5C complex specifically recruits cox1 mRNA to the mitochondrial ribosome for translation initiation. This is Mitochondrial translation factor 2 from Schizosaccharomyces pombe (strain 972 / ATCC 24843) (Fission yeast).